A 390-amino-acid polypeptide reads, in one-letter code: GTPase Obg (390 aa).

An Obg domain is found at 1 to 159 (MKFVDEATIL…RELTLELLLL (159 aa)). A disordered region spans residues 128-147 (SRFKSSVNRAPRQKTNGTKG). The span at 129 to 145 (RFKSSVNRAPRQKTNGT) shows a compositional bias: polar residues. Residues 160–333 (ADVGMLGLPN…LCWDVMNFLK (174 aa)) enclose the OBG-type G domain. GTP is bound by residues 166 to 173 (GLPNAGKS), 191 to 195 (FTTLV), 213 to 216 (DIPG), 283 to 286 (NKVD), and 314 to 316 (SAA). Residues Ser-173 and Thr-193 each contribute to the Mg(2+) site.

The protein belongs to the TRAFAC class OBG-HflX-like GTPase superfamily. OBG GTPase family. In terms of assembly, monomer. The cofactor is Mg(2+).

The protein localises to the cytoplasm. An essential GTPase which binds GTP, GDP and possibly (p)ppGpp with moderate affinity, with high nucleotide exchange rates and a fairly low GTP hydrolysis rate. Plays a role in control of the cell cycle, stress response, ribosome biogenesis and in those bacteria that undergo differentiation, in morphogenesis control. This is GTPase Obg from Pectobacterium atrosepticum (strain SCRI 1043 / ATCC BAA-672) (Erwinia carotovora subsp. atroseptica).